The sequence spans 388 residues: MNLHEYQGKQLFAEYGLPVSKGFAVDTPEEAAEACDKIGGSEWVVKAQVHAGGRGKAGGVKLVKSKEDAKAFAQQWLGKNLVTYQTDANGQPVSKILVESCTDIDKELYLGAVVDRSSRRIVFMASTEGGVDIEKVAHDTPEKILKVTIDPLVGAQPYQGRELAFQLGLKGDQIKQFTHIFVGLAKLFQDYDLALLEVNPLVIKKDGNLHCLDAKINIDSNALYRQPKLRAMHDPSQDDAREAHAQKWELNYVALEGNIGCMVNGAGLAMGTMDIVNLHGGKPANFLDVGGGATKERVTEAFKIILSDSNVKAVLVNIFGGIVRCDMIAEGIIGAVKEVGVKVPVVVRLEGNNAELGAKVLAESGLNIIAATSLTDAAQQVVKAAEGK.

The region spanning 9–244 (KQLFAEYGLP…PSQDDAREAH (236 aa)) is the ATP-grasp domain. ATP contacts are provided by residues K46, 53 to 55 (GRG), E99, T102, and E107. Residues N199 and D213 each coordinate Mg(2+). Residues N264 and 321-323 (GIV) each bind substrate.

It belongs to the succinate/malate CoA ligase beta subunit family. Heterotetramer of two alpha and two beta subunits. Mg(2+) is required as a cofactor.

It catalyses the reaction succinate + ATP + CoA = succinyl-CoA + ADP + phosphate. The enzyme catalyses GTP + succinate + CoA = succinyl-CoA + GDP + phosphate. It functions in the pathway carbohydrate metabolism; tricarboxylic acid cycle; succinate from succinyl-CoA (ligase route): step 1/1. Functionally, succinyl-CoA synthetase functions in the citric acid cycle (TCA), coupling the hydrolysis of succinyl-CoA to the synthesis of either ATP or GTP and thus represents the only step of substrate-level phosphorylation in the TCA. The beta subunit provides nucleotide specificity of the enzyme and binds the substrate succinate, while the binding sites for coenzyme A and phosphate are found in the alpha subunit. This Pseudomonas aeruginosa (strain UCBPP-PA14) protein is Succinate--CoA ligase [ADP-forming] subunit beta.